The following is a 146-amino-acid chain: uncharacterized protein (146 aa).

The region spanning 7-146 (LQINYKTDEL…EGHDILIWNP (140 aa)) is the N-acetyltransferase domain.

This is an uncharacterized protein from Staphylococcus epidermidis (strain ATCC 12228 / FDA PCI 1200).